The chain runs to 667 residues: Transmembrane 9 superfamily member 1 (667 aa).

Positions 1–22 (MIYKMAHVQLLLLYFFVSTVKA) are cleaved as a signal peptide. At 23–302 (FYLPGVAPTT…DKYLHVYDPS (280 aa)) the chain is on the lumenal side. N-linked (GlcNAc...) asparagine glycosylation is found at Asn61 and Asn282. Residues 303–323 (IQWFSLINFSLVVVLLSSVVI) form a helical membrane-spanning segment. At 324–370 (HSLLRALKSDFARYNELNLDDDFQEDSGWKLNHGDVFRSPSQSLTLS) the chain is on the cytoplasmic side. Residues 371-391 (ILVGSGVQLFLMVTCSIFFAA) form a helical membrane-spanning segment. Residues 392 to 405 (LGFLSPSSRGSLAT) are Lumenal-facing. The chain crosses the membrane as a helical span at residues 406-426 (VMFILYALFGFVGSYTSMGIY). At 427–442 (KFFNGPYWKANLILTP) the chain is on the cytoplasmic side. Residues 443–463 (LLVPGAILLIIIALNFFLMFV) form a helical membrane-spanning segment. The Lumenal portion of the chain corresponds to 464–474 (HSSGVIPASTL). The helical transmembrane segment at 475–495 (FFMVFLWFLFSIPLSFAGSLI) threads the bilayer. The Cytoplasmic segment spans residues 496–527 (ARKRCHWDEHPTKTNQIARQIPFQPWYLKTIP). The helical transmembrane segment at 528 to 548 (ATLIAGIFPFGSIAVELYFIY) threads the bilayer. The Lumenal portion of the chain corresponds to 549–560 (TSLWFNKIFYMF). The chain crosses the membrane as a helical span at residues 561 to 581 (GFLFFSFLLLTLTSSLVTILI). Residues 582–596 (TYHSLCLENWKWQWR) lie on the Cytoplasmic side of the membrane. The chain crosses the membrane as a helical span at residues 597–617 (GFIIGGAGCALYVFIHSILFT). Residues 618–635 (KFKLGGFTTIVLYVGYSS) are Lumenal-facing. A helical membrane pass occupies residues 636–656 (VISLLCCLVTGSIGFISSMLF). The Cytoplasmic segment spans residues 657-667 (VRKIYSSIKVD).

This sequence belongs to the nonaspanin (TM9SF) (TC 9.A.2) family.

The protein localises to the endosome membrane. Its subcellular location is the vacuole membrane. Its function is as follows. With TMN2 and TMN3, plays a critical role in the late stages of a nutrient-controlled pathway notably regulating FLO11 gene expression. Acts downstream of RAS2 and TOR. Essential for cell adhesion and filamentous growth. May play a role as effector of cellular copper homeostasis. This chain is Transmembrane 9 superfamily member 1 (EMP70), found in Saccharomyces cerevisiae (strain ATCC 204508 / S288c) (Baker's yeast).